The following is a 307-amino-acid chain: Ribosomal RNA small subunit methyltransferase H (307 aa).

S-adenosyl-L-methionine contacts are provided by residues 32 to 34, aspartate 51, isoleucine 82, aspartate 99, and glutamine 106; that span reads AGH.

The protein belongs to the methyltransferase superfamily. RsmH family.

It is found in the cytoplasm. It catalyses the reaction cytidine(1402) in 16S rRNA + S-adenosyl-L-methionine = N(4)-methylcytidine(1402) in 16S rRNA + S-adenosyl-L-homocysteine + H(+). Specifically methylates the N4 position of cytidine in position 1402 (C1402) of 16S rRNA. In Campylobacter concisus (strain 13826), this protein is Ribosomal RNA small subunit methyltransferase H.